The chain runs to 376 residues: Actin, cytoplasmic (376 aa).

It belongs to the actin family.

It is found in the cytoplasm. Its subcellular location is the cytoskeleton. The enzyme catalyses ATP + H2O = ADP + phosphate + H(+). Actins are highly conserved proteins that are involved in various types of cell motility and are ubiquitously expressed in all eukaryotic cells. This is Actin, cytoplasmic from Tetrahymena pyriformis.